Here is a 309-residue protein sequence, read N- to C-terminus: Ferredoxin--NADP reductase (309 aa).

FAD-binding residues include D25, Q33, Y38, V77, F107, D267, and T307.

Belongs to the ferredoxin--NADP reductase type 2 family. In terms of assembly, homodimer. FAD is required as a cofactor.

It carries out the reaction 2 reduced [2Fe-2S]-[ferredoxin] + NADP(+) + H(+) = 2 oxidized [2Fe-2S]-[ferredoxin] + NADPH. The sequence is that of Ferredoxin--NADP reductase from Lactobacillus acidophilus (strain ATCC 700396 / NCK56 / N2 / NCFM).